We begin with the raw amino-acid sequence, 632 residues long: MRLSWVIGGAQGTGIDTAANIFGNAVASAGYYIYGNREYYSNIKGGHSYFSLTISDKRVRSNTQKIDILVSFDAETVFQHFYDVKDILIYNKAVETTKIDAVQSMEPELAERIKDFLTKQGYETTVKGALEYASKNNVTLIPVNYDEIAKKVADEMKVPLSVTERVKNIVGITISYKLLGLDVNYLIEAINSTFKQDLYRKMNELAVKDSYDIVESRYNLKPSSKERRRFWLDGNTAVAIGKIYGGVRFQSYYPITPASDESVYIEAHQDVLMEDPITGDKKKGTIVVVQAEDELAAINMAIGAALTGVRAATATSGPGFSLMVEGLGWAGMNEVPVVITYYIRGGPSTGLPTRTAQSDLIFPIFAGHGEFPKIVLASGDHAEAFKDAIWALNLAEKYQTPVIHLVEKTLANSYSTIPYEELELDKLKAERGKIVESGDISYKRFKFTEDGISPRAFLGKATMYYTGDEHNEEGHISEDVVNRTMMYEKRMKKLEVADKEIPEESRVKIYGDLNSRNLIITWGSPTGVLRDILEESNFDFTLLQIRMFSPFPKNLVSKLMEGRDKIITVEGNYLAQTSLLVKMYTGKDVTNSILKWNGRPFLRDELEEALIKVIKDGEKRVVLNGGIYTSME.

The YPITP motif signature appears at 253–257 (YPITP). 2 residues coordinate substrate: Thr256 and Arg344.

In terms of assembly, heterodimer composed of an alpha and a beta subunit.

The protein localises to the cytoplasm. The enzyme catalyses a 2-oxocarboxylate + 2 oxidized [2Fe-2S]-[ferredoxin] + CoA = an acyl-CoA + 2 reduced [2Fe-2S]-[ferredoxin] + CO2 + H(+). Its function is as follows. Catalyzes the coenzyme A-dependent oxidative decarboxylation of different 2-oxoacids such as 2-oxoglutarate, pyruvate and 2-oxobutyrate to form their CoA derivatives. This Sulfolobus sp protein is 2-oxoacid:ferredoxin oxidoreductase subunit alpha.